We begin with the raw amino-acid sequence, 878 residues long: Fanconi-associated nuclease 1 homolog (878 aa).

A UBZ4-type zinc finger spans residues 32 to 59 (GKTCPLCNIKFSLASYRSHMNVCKVADD). C35, C38, H50, and C54 together coordinate Zn(2+). The interval 88-180 (ENSGQEIPVN…QKSQSESQEA (93 aa)) is disordered. Over residues 142 to 161 (SEVRSVEKEIKKSPVWENRR) the composition is skewed to basic and acidic residues. Positions 168–179 (QNSQKSQSESQE) are enriched in low complexity. Positions 695, 823, 838, and 839 each coordinate Mn(2+). A VRR-NUC domain is found at 757 to 870 (QETIEDNIRR…GIKAEVCHVE (114 aa)).

The protein belongs to the FAN1 family. Requires Mn(2+) as cofactor. The cofactor is Mg(2+).

It is found in the nucleus. It catalyses the reaction Hydrolytically removes 5'-nucleotides successively from the 3'-hydroxy termini of 3'-hydroxy-terminated oligonucleotides.. Functionally, nuclease required for the repair of DNA interstrand cross-links (ICL). Acts as a 5'-3' exonuclease that anchors at a cut end of DNA and cleaves DNA successively at every third nucleotide, allowing to excise an ICL from one strand through flanking incisions. The chain is Fanconi-associated nuclease 1 homolog (fan-1) from Caenorhabditis briggsae.